We begin with the raw amino-acid sequence, 146 residues long: Dual specificity phosphatase Cdc25 (146 aa).

One can recognise a Rhodanese domain in the interval 34-135 (RRPNIAIIDV…WEASGKPVCR (102 aa)). Residue 45-48 (DEER) coordinates substrate. Residue histidine 53 participates in Zn(2+) binding. 68–71 (KISH) lines the substrate pocket. The Cysteine persulfide intermediate role is filled by cysteine 86. 90-92 (QVR) contributes to the substrate binding site. Positions 134, 136, and 141 each coordinate Zn(2+).

The protein belongs to the MPI phosphatase family. In terms of tissue distribution, expressed in roots and at lower levels in shoots (at protein level). Expressed in leaves, stems and flowers.

The protein localises to the nucleus. It catalyses the reaction O-phospho-L-tyrosyl-[protein] + H2O = L-tyrosyl-[protein] + phosphate. The enzyme catalyses [glutaredoxin]-dithiol + arsenate + glutathione + H(+) = glutathionyl-S-S-[glutaredoxin] + arsenite + H2O. Inhibited by NSC95397. In terms of biological role, tyrosine protein phosphatase that dephosphorylates CDK complex and activate its kinase activity in vitro. Its function is as follows. Arsenate reductase that plays a major role in the reduction of arsenate to arsenite and arsenic retention in roots. Has an in vitro and in vivo arsenate reductase activity. Plays no role in arsenic metabolism. The protein is Dual specificity phosphatase Cdc25 of Arabidopsis thaliana (Mouse-ear cress).